Reading from the N-terminus, the 462-residue chain is Citrate synthase, mitochondrial (462 aa).

Residues 1 to 21 (MRSINQLLKQASLSQKSQYNF) constitute a mitochondrion transit peptide. Residues histidine 300, histidine 346, and aspartate 401 contribute to the active site.

The protein belongs to the citrate synthase family. As to quaternary structure, homodimer.

It localises to the mitochondrion matrix. The protein localises to the cytoplasm. It is found in the cytoskeleton. The catalysed reaction is oxaloacetate + acetyl-CoA + H2O = citrate + CoA + H(+). The protein operates within carbohydrate metabolism; tricarboxylic acid cycle; isocitrate from oxaloacetate: step 1/2. Its function is as follows. Structural protein involved in oral morphogenesis and in pronuclear behavior during conjugation. Respiratory enzyme. This Tetrahymena thermophila protein is Citrate synthase, mitochondrial.